The chain runs to 1166 residues: Poly [ADP-ribose] polymerase tankyrase-2 (1166 aa).

ANK repeat units lie at residues 57–89 (RKST…ARDD), 90–122 (GGLI…ARDN), and 123–155 (WNYT…IRNT). Asn-203 is modified ((3S)-3-hydroxyasparagine; by HIF1AN; partial). ANK repeat units follow at residues 210-242 (RKST…AKDK), 243-275 (GDLV…AMDL), 276-308 (WQFT…LLNC), 363-398 (THET…EKTK), 399-431 (EFLT…ALDN), and 432-464 (LGQT…IISL). His-238 carries the post-translational modification (3S)-3-hydroxyhistidine; by HIF1AN; partial. Asn-271 is modified ((3S)-3-hydroxyasparagine; by HIF1AN; partial). Residue Asn-427 is modified to (3S)-3-hydroxyasparagine; by HIF1AN; partial. Asn-518 bears the (3S)-3-hydroxyasparagine; by HIF1AN; partial mark. ANK repeat units lie at residues 525–557 (RQST…AKDK), 558–590 (GGLV…VADL), and 591–623 (WKFT…KKNR). The segment at 545–553 (LLQHGADVH) is HIF1AN-binding. Residue His-553 is modified to (3S)-3-hydroxyhistidine; by HIF1AN; partial. A (3S)-3-hydroxyasparagine; by HIF1AN; partial modification is found at Asn-586. (3S)-3-hydroxyasparagine; by HIF1AN; partial occurs at positions 671, 706, and 739. 3 ANK repeats span residues 678–710 (RHST…AQDK), 711–743 (GGLI…ATDK), and 744–776 (WAFT…LKNQ). Positions 819–839 (GATADALSSGPSSPSSLSAAS) are disordered. Positions 822 to 839 (ADALSSGPSSPSSLSAAS) are enriched in low complexity. The SAM domain maps to 873-936 (GVDFSITQFV…IKGVERLISG (64 aa)). A PARP catalytic domain is found at 959–1164 (SPDDKEFQSV…YQIMRPEGMV (206 aa)). Zn(2+) is bound by residues Cys-1081, His-1084, Cys-1089, and Cys-1092.

The protein belongs to the ARTD/PARP family. In terms of assembly, oligomerizes and associates with TNKS. Interacts with the cytoplasmic domain of LNPEP/Otase in SLC2A4/GLUT4-vesicles. Binds to the N-terminus of Grb14 and TRF1 with its ankyrin repeat region. Interacts with HIF1AN. Interacts with RNF146; this interaction leads to ubiquitination and proteasomal degradation. Interacts with NUMA1. Post-translationally, ubiquitinated at 'Lys-48' and 'Lys-63' by RNF146 when auto-poly-ADP-ribosylated; this leads to degradation. Deubiquitinated by USP25; leading to stabilization. In terms of processing, ADP-ribosylated (-auto). Poly-ADP-ribosylated protein is recognized by RNF146, followed by ubiquitination. The crystallographic evidence suggests that the 3-hydroxyhistidine may be the (3S) stereoisomer. In terms of tissue distribution, highly expressed in placenta, skeletal muscle, liver, brain, kidney, heart, thymus, spinal cord, lung, peripheral blood leukocytes, pancreas, lymph nodes, spleen, prostate, testis, ovary, small intestine, colon, mammary gland, breast and breast carcinoma, and in common-type meningioma. Highly expressed in fetal liver, heart and brain.

The protein resides in the cytoplasm. The protein localises to the golgi apparatus membrane. It is found in the nucleus. Its subcellular location is the chromosome. It localises to the telomere. The catalysed reaction is NAD(+) + (ADP-D-ribosyl)n-acceptor = nicotinamide + (ADP-D-ribosyl)n+1-acceptor + H(+).. It catalyses the reaction L-aspartyl-[protein] + NAD(+) = 4-O-(ADP-D-ribosyl)-L-aspartyl-[protein] + nicotinamide. The enzyme catalyses L-glutamyl-[protein] + NAD(+) = 5-O-(ADP-D-ribosyl)-L-glutamyl-[protein] + nicotinamide. With respect to regulation, specifically inhibited by XAV939, a small molecule, leading to inhibit the Wnt signaling pathway by stabilizing AXIN1 and AXIN2. Inhibited by talazoparib. In terms of biological role, poly-ADP-ribosyltransferase involved in various processes such as Wnt signaling pathway, telomere length and vesicle trafficking. Acts as an activator of the Wnt signaling pathway by mediating poly-ADP-ribosylation of AXIN1 and AXIN2, 2 key components of the beta-catenin destruction complex: poly-ADP-ribosylated target proteins are recognized by RNF146, which mediates their ubiquitination and subsequent degradation. Also mediates poly-ADP-ribosylation of BLZF1 and CASC3, followed by recruitment of RNF146 and subsequent ubiquitination. Mediates poly-ADP-ribosylation of TERF1, thereby contributing to the regulation of telomere length. Stimulates 26S proteasome activity. This is Poly [ADP-ribose] polymerase tankyrase-2 from Homo sapiens (Human).